The primary structure comprises 38 residues: Photosystem II reaction center protein L (38 aa).

Residues 17-37 (SLYWGLLCIFVLAILFSSYFF) form a helical membrane-spanning segment.

This sequence belongs to the PsbL family. PSII is composed of 1 copy each of membrane proteins PsbA, PsbB, PsbC, PsbD, PsbE, PsbF, PsbH, PsbI, PsbJ, PsbK, PsbL, PsbM, PsbT, PsbX, PsbY, PsbZ, Psb30/Ycf12, at least 3 peripheral proteins of the oxygen-evolving complex and a large number of cofactors. It forms dimeric complexes.

The protein resides in the plastid. It localises to the chloroplast thylakoid membrane. Functionally, one of the components of the core complex of photosystem II (PSII). PSII is a light-driven water:plastoquinone oxidoreductase that uses light energy to abstract electrons from H(2)O, generating O(2) and a proton gradient subsequently used for ATP formation. It consists of a core antenna complex that captures photons, and an electron transfer chain that converts photonic excitation into a charge separation. This subunit is found at the monomer-monomer interface and is required for correct PSII assembly and/or dimerization. This is Photosystem II reaction center protein L from Cyanidioschyzon merolae (strain NIES-3377 / 10D) (Unicellular red alga).